The sequence spans 163 residues: UPF0262 protein RPB_4349 (163 aa).

The protein belongs to the UPF0262 family.

This chain is UPF0262 protein RPB_4349, found in Rhodopseudomonas palustris (strain HaA2).